We begin with the raw amino-acid sequence, 296 residues long: Glycine--tRNA ligase alpha subunit (296 aa).

This sequence belongs to the class-II aminoacyl-tRNA synthetase family. Tetramer of two alpha and two beta subunits.

Its subcellular location is the cytoplasm. The enzyme catalyses tRNA(Gly) + glycine + ATP = glycyl-tRNA(Gly) + AMP + diphosphate. The sequence is that of Glycine--tRNA ligase alpha subunit from Synechococcus sp. (strain CC9605).